A 123-amino-acid polypeptide reads, in one-letter code: MTVTLTEKAEFRLRAFLRGSAKDANETTKGIRISVKDGGCSGYEYLMDVTSQPQPDDLVSQQGSVLVYVDAKSAPLLEGIVIDFVEGLVESGFKFTNPNATSTCGCGKSFKAGDCSPEGVPCS.

This sequence belongs to the HesB/IscA family.

Functionally, may be required for efficient nitrogen fixation. In Trichormus variabilis (strain ATCC 29413 / PCC 7937) (Anabaena variabilis), this protein is Protein HesB, heterocyst (hesB1).